The primary structure comprises 191 residues: Potassium-transporting ATPase KdpC subunit (191 aa).

Residues 6 to 26 form a helical membrane-spanning segment; that stretch reads PAILLFILLTLVTGGLYPLLT.

It belongs to the KdpC family. As to quaternary structure, the system is composed of three essential subunits: KdpA, KdpB and KdpC.

The protein localises to the cell inner membrane. In terms of biological role, part of the high-affinity ATP-driven potassium transport (or Kdp) system, which catalyzes the hydrolysis of ATP coupled with the electrogenic transport of potassium into the cytoplasm. This subunit acts as a catalytic chaperone that increases the ATP-binding affinity of the ATP-hydrolyzing subunit KdpB by the formation of a transient KdpB/KdpC/ATP ternary complex. In Enterobacter sp. (strain 638), this protein is Potassium-transporting ATPase KdpC subunit.